The primary structure comprises 435 residues: Citrate synthase (435 aa).

Active-site residues include histidine 311 and aspartate 370.

Belongs to the citrate synthase family. Homohexamer.

The catalysed reaction is oxaloacetate + acetyl-CoA + H2O = citrate + CoA + H(+). The protein operates within carbohydrate metabolism; tricarboxylic acid cycle; isocitrate from oxaloacetate: step 1/2. The protein is Citrate synthase (gltA) of Rickettsia africae (strain ESF-5).